The primary structure comprises 633 residues: Extracellular metalloproteinase 5 (633 aa).

Residues 1-21 (MHGLLLAAAGLLSLPLHVIAH) form the signal peptide. A propeptide spanning residues 22–245 (PQPSTNLAGR…HNVVDYVSHA (224 aa)) is cleaved from the precursor. The N-linked (GlcNAc...) asparagine glycan is linked to N286. Residue H428 coordinates Zn(2+). The active site involves E429. A Zn(2+)-binding site is contributed by H432. N592 and N621 each carry an N-linked (GlcNAc...) asparagine glycan.

It belongs to the peptidase M36 family. It depends on Zn(2+) as a cofactor.

It is found in the secreted. Functionally, secreted metalloproteinase probably acting as a virulence factor. In Arthroderma benhamiae (Trichophyton mentagrophytes), this protein is Extracellular metalloproteinase 5 (MEP5).